Consider the following 665-residue polypeptide: Probable arginine--tRNA ligase, cytoplasmic (665 aa).

Residues 204–206 (SPN), His215, Tyr390, Asp394, and Gln418 each bind L-arginine. Positions 205–216 (PNIAKQMHVGHL) match the 'HIGH' region motif. The tract at residues 535–549 (NTAVYLLYTYTRICS) is interaction with tRNA.

This sequence belongs to the class-I aminoacyl-tRNA synthetase family.

It is found in the cytoplasm. It localises to the cytosol. It catalyses the reaction tRNA(Arg) + L-arginine + ATP = L-arginyl-tRNA(Arg) + AMP + diphosphate. Forms part of a macromolecular complex that catalyzes the attachment of specific amino acids to cognate tRNAs during protein synthesis. The polypeptide is Probable arginine--tRNA ligase, cytoplasmic (Drosophila melanogaster (Fruit fly)).